Reading from the N-terminus, the 270-residue chain is Type III pantothenate kinase (270 aa).

6–13 (DAGNTNIV) contacts ATP. 107-110 (GADR) serves as a coordination point for substrate. The active-site Proton acceptor is Asp-109. Asp-129 is a binding site for K(+). An ATP-binding site is contributed by Thr-132. Thr-184 lines the substrate pocket.

It belongs to the type III pantothenate kinase family. As to quaternary structure, homodimer. Requires NH4(+) as cofactor. K(+) serves as cofactor.

The protein resides in the cytoplasm. It catalyses the reaction (R)-pantothenate + ATP = (R)-4'-phosphopantothenate + ADP + H(+). It functions in the pathway cofactor biosynthesis; coenzyme A biosynthesis; CoA from (R)-pantothenate: step 1/5. Its function is as follows. Catalyzes the phosphorylation of pantothenate (Pan), the first step in CoA biosynthesis. This is Type III pantothenate kinase from Gluconobacter oxydans (strain 621H) (Gluconobacter suboxydans).